We begin with the raw amino-acid sequence, 141 residues long: Nucleoside diphosphate kinase (141 aa).

Positions 9, 57, 85, 91, 102, and 112 each coordinate ATP. Histidine 115 acts as the Pros-phosphohistidine intermediate in catalysis.

It belongs to the NDK family. In terms of assembly, homotetramer. It depends on Mg(2+) as a cofactor.

The protein resides in the cytoplasm. The enzyme catalyses a 2'-deoxyribonucleoside 5'-diphosphate + ATP = a 2'-deoxyribonucleoside 5'-triphosphate + ADP. The catalysed reaction is a ribonucleoside 5'-diphosphate + ATP = a ribonucleoside 5'-triphosphate + ADP. Its function is as follows. Major role in the synthesis of nucleoside triphosphates other than ATP. The ATP gamma phosphate is transferred to the NDP beta phosphate via a ping-pong mechanism, using a phosphorylated active-site intermediate. The protein is Nucleoside diphosphate kinase of Chloroherpeton thalassium (strain ATCC 35110 / GB-78).